The sequence spans 290 residues: Transposon Ty3-I Gag polyprotein (290 aa).

Ser-2 is subject to N-acetylserine. The segment at 265 to 282 adopts a CCHC-type zinc-finger fold; the sequence is RLCFYCKKEGHRLNECRA.

It localises to the cytoplasm. Capsid protein (CA) is the structural component of the virus-like particle (VLP), forming the shell that encapsulates the retrotransposons dimeric RNA genome. Its function is as follows. Nucleocapsid protein p9 (NC) forms the nucleocore that coats the retro-elements dimeric RNA. Binds these RNAs through its zinc fingers. Promotes primer tRNA(i)-Met annealing to the multipartite primer-binding site (PBS), dimerization of Ty3 RNA and initiation of reverse transcription. The sequence is that of Transposon Ty3-I Gag polyprotein (TY3A-I) from Saccharomyces cerevisiae (strain ATCC 204508 / S288c) (Baker's yeast).